Consider the following 238-residue polypeptide: Ribitol-5-phosphate cytidylyltransferase 2 (238 aa).

Residues 7–10 and 81–87 each bind CTP; these read LAGG and GTDRNET.

It belongs to the IspD/TarI cytidylyltransferase family. TarI subfamily. In terms of assembly, heterodimer together with TarJ.

It carries out the reaction D-ribitol 5-phosphate + CTP + H(+) = CDP-L-ribitol + diphosphate. It functions in the pathway cell wall biogenesis; poly(ribitol phosphate) teichoic acid biosynthesis. In terms of biological role, catalyzes the transfer of the cytidylyl group of CTP to D-ribitol 5-phosphate. This chain is Ribitol-5-phosphate cytidylyltransferase 2, found in Staphylococcus aureus (strain NCTC 8325 / PS 47).